The chain runs to 214 residues: Ribosomal RNA small subunit methyltransferase G (214 aa).

Residues Gly81, Met86, 132-133, and Arg147 each bind S-adenosyl-L-methionine; that span reads VE.

Belongs to the methyltransferase superfamily. RNA methyltransferase RsmG family.

It is found in the cytoplasm. The enzyme catalyses guanosine(527) in 16S rRNA + S-adenosyl-L-methionine = N(7)-methylguanosine(527) in 16S rRNA + S-adenosyl-L-homocysteine. Functionally, specifically methylates the N7 position of guanine in position 527 of 16S rRNA. This chain is Ribosomal RNA small subunit methyltransferase G, found in Pseudomonas aeruginosa (strain UCBPP-PA14).